Consider the following 874-residue polypeptide: MKSAEIREAFLRFFEEQGHTRVASSSLIPGNDPTLLFTNAGMNQFKDCFLGQEKRAYTRAVSSQKCVRAGGKHNDLENVGYTARHHTFFEMLGNFSFGDYFKRDAITFAWTFLTSDKWLNLPKEKLWVTVYATDDEAYDIWTKEVGVPAERMVRIGDNKGAPYASDNFWTMGDTGPCGPCTEIFYDHGADIWGGPPGSPEEDGDRYIEIWNNVFMQFNRTADGVLHPLPAPSVDTGMGLERISAVLQHVHSNYEIDLFQSLLDAAAKAIGCTNDAQASLKVVADHIRSCGFLIADGVLPSNEGRGYVLRRIIRRACRHGNKLGAKGSFFYQIVAALVAEMGEAFPELKSQQAHIERVLKAEEEQFAKTLEQGLKILEQDLAELKGSVVPGDVVFKLYDTYGFPMDLTGDIARERNLTLDEEGFEREMEAQRVRARSASSFGMDYNSLVKVDVATEFTGYHATSGSAKVVALYKEGQSVDMLSEGEEGVVVLDQTPFYAESGGQIGDCGYLQAGNARFDVRDTTKTGGAFLHHGVLAKGSLTVGAPVETQVDAQVRHATSLNHSATHLLHAALRQVLGEHVQQKGSLVDSQRLRFDFSHFEAIKPEQIKALEDIVNAEIRKNTPVETEETDIDTAKKKGAMALFGEKYGDSVRVLSMGGDFSVELCGGIHANRTGDIGLLKITSEGGVASGVRRIEAVTGAAALAYLNAAEEQLKEAATLVKGSRDNLIDKLSAVLERNRLLEKQLEQLQAKAASAAGDDLSAQAADVKGVKVLAARLDGQDGKALLALVDQLKNKLGRAVILLGSVHEEKVVLVAGVTKDLTGQLKAGDLMKQAAAAVGGKGGGRPDMAQGGGVDAAALDAALALTVPFVEQGI.

4 residues coordinate Zn(2+): histidine 562, histidine 566, cysteine 665, and histidine 669.

Belongs to the class-II aminoacyl-tRNA synthetase family. Requires Zn(2+) as cofactor.

It localises to the cytoplasm. The catalysed reaction is tRNA(Ala) + L-alanine + ATP = L-alanyl-tRNA(Ala) + AMP + diphosphate. In terms of biological role, catalyzes the attachment of alanine to tRNA(Ala) in a two-step reaction: alanine is first activated by ATP to form Ala-AMP and then transferred to the acceptor end of tRNA(Ala). Also edits incorrectly charged Ser-tRNA(Ala) and Gly-tRNA(Ala) via its editing domain. The chain is Alanine--tRNA ligase from Pseudomonas fluorescens (strain ATCC BAA-477 / NRRL B-23932 / Pf-5).